Reading from the N-terminus, the 965-residue chain is 26S proteasome non-ATPase regulatory subunit 1 (965 aa).

PC repeat units lie at residues 380–413 (NAVASLGLIHHGQESSAMKVLEPYLPKESVEGFG), 418–452 (GAMLAYGLIHAKHGDATAMSTLAQWLKTAENEPVR), 454–488 (GACLGFGVAGLGSSSVSNYEKVREVLQRDEAVSGE), 489–523 (SAGIAMGLIMAGHLNQEVFNELKQYTVDTQHDKTQ), 560–595 (TGICMLSMAYAGTGSPDVVRRLLEKVATDPNLDVKR), 630–664 (GAAMALGIACAGTGNMEAIALIEPMISDKEGFVRK), 665–706 (GALL…SLVK), and 708–738 (GAIIAQGLLDIGGQNAAVTMQNSDKQPDMGS). Residues 836 to 856 (ASASSAAAAPSSSSTSGTAPA) show a composition bias toward low complexity. Disordered stretches follow at residues 836–889 (ASAS…LQNP) and 943–965 (TPASSGNTENKPHSTFEININDF). Basic and acidic residues predominate over residues 863–882 (EVDQPGKSKKEKAPEKDTKP).

It belongs to the proteasome subunit S1 family.

In terms of biological role, acts as a regulatory subunit of the 26 proteasome which is involved in the ATP-dependent degradation of ubiquitinated proteins. The chain is 26S proteasome non-ATPase regulatory subunit 1 (rpn-2) from Caenorhabditis elegans.